Reading from the N-terminus, the 244-residue chain is MAYDIISDIHGCYDEMTALIQKLGYTIKNGVPVHEEGRVLVFAGDLTDRGPKSIEVIRFVAGAYEKGAVRYVPGNHCNKLYRYLKGNPVKVMHGLETTAAELEELSKDEKKSVSEQFMKLYETAPLYDILHNGELVVAHAGIRADDIGKYTRRVKDFVLYGDVTGETYPDGRPIRRDWAAAYNGKAWVVYGHTPVKEPRKVNRTINIDTGCVFGNQLTGFRFPEIETVSVPSSLPYDESRFRPI.

Belongs to the PrpE family. The cofactor is Ni(2+).

The protein localises to the forespore. It catalyses the reaction P(1),P(4)-bis(5'-guanosyl) tetraphosphate + H2O = GMP + GTP + 2 H(+). With respect to regulation, inhibited by EDTA. In terms of biological role, asymmetrically hydrolyzes Ap4p to yield AMP and ATP. Does not hydrolyze Ap2a or Ap6A. Also has an ATPase activity. Was shown to dephosphorylate phosphotyrosine but not phosphoserine or phosphothreonine from phosphorylated peptides. Involved in spore germination by controlling expression of genes coding for GerA and GerK receptors. The sequence is that of Bis(5'-nucleosyl)-tetraphosphatase PrpE [asymmetrical] (prpE) from Bacillus subtilis (strain 168).